We begin with the raw amino-acid sequence, 459 residues long: Exodeoxyribonuclease 7 large subunit (459 aa).

This sequence belongs to the XseA family. In terms of assembly, heterooligomer composed of large and small subunits.

It localises to the cytoplasm. The catalysed reaction is Exonucleolytic cleavage in either 5'- to 3'- or 3'- to 5'-direction to yield nucleoside 5'-phosphates.. Functionally, bidirectionally degrades single-stranded DNA into large acid-insoluble oligonucleotides, which are then degraded further into small acid-soluble oligonucleotides. This is Exodeoxyribonuclease 7 large subunit from Pseudomonas fluorescens (strain Pf0-1).